A 454-amino-acid chain; its full sequence is MTKEQWGQLQQRLLKTVGQNNYKNWIEPIEFGSTQDGVATFEVPTNFLGNYVSQNFADLILHEVRQEDPAVRRLRFAVPSHVNATTKPARPAQATAPRAPAEKTPRSTLSTAPLDARFTFDNFIVGKPNELAHAAAKRVAEGGPVTFNPLFLYGGVGLGKTHLMHAIAHELRLRRPEMNVLYLSAEQFMYRFVQALRDRKMMDFKEIFRSVDVLMVDDVQFIAGKGSTQEEFFHTFNALVDQNKQIIISGDRAPGEIKDMEERVKSRLQCGLVVDLHPTDYELRLGILQSKVEQQRKNYPGLDISDGVLEFLAHRISTNVRVLEGALTRLCAFASLVGREIDMELTQDCLSDVLRASERKITVEEIQRKVSDHYNIRLSDMIGPKRLRSYARPRQVAMYLSKKMTSRSLPEIGRRFGGRDHTTVMHGVKRIEELKIQDGQIAEDLELLRRALEE.

The domain I, interacts with DnaA modulators stretch occupies residues 1-71; sequence MTKEQWGQLQ…HEVRQEDPAV (71 aa). The segment at 71–112 is domain II; the sequence is VRRLRFAVPSHVNATTKPARPAQATAPRAPAEKTPRSTLSTA. The tract at residues 82–108 is disordered; that stretch reads VNATTKPARPAQATAPRAPAEKTPRST. Residues 84 to 99 show a composition bias toward low complexity; it reads ATTKPARPAQATAPRA. Residues 113 to 334 form a domain III, AAA+ region region; it reads PLDARFTFDN…GALTRLCAFA (222 aa). The ATP site is built by Gly157, Gly159, Lys160, and Thr161. The interval 335–454 is domain IV, binds dsDNA; the sequence is SLVGREIDME…LELLRRALEE (120 aa).

This sequence belongs to the DnaA family. In terms of assembly, oligomerizes as a right-handed, spiral filament on DNA at oriC.

Its subcellular location is the cytoplasm. In terms of biological role, plays an essential role in the initiation and regulation of chromosomal replication. ATP-DnaA binds to the origin of replication (oriC) to initiate formation of the DNA replication initiation complex once per cell cycle. Binds the DnaA box (a 9 base pair repeat at the origin) and separates the double-stranded (ds)DNA. Forms a right-handed helical filament on oriC DNA; dsDNA binds to the exterior of the filament while single-stranded (ss)DNA is stabiized in the filament's interior. The ATP-DnaA-oriC complex binds and stabilizes one strand of the AT-rich DNA unwinding element (DUE), permitting loading of DNA polymerase. After initiation quickly degrades to an ADP-DnaA complex that is not apt for DNA replication. Binds acidic phospholipids. In Roseobacter denitrificans (strain ATCC 33942 / OCh 114) (Erythrobacter sp. (strain OCh 114)), this protein is Chromosomal replication initiator protein DnaA.